We begin with the raw amino-acid sequence, 430 residues long: Protein POLLENLESS 3-LIKE 2 (430 aa).

Residues 1-21 are disordered; the sequence is MMRDVFRPTKSAPCSPAKPLG. TPR repeat units lie at residues 40-73, 74-107, 110-143, 170-203, 205-236, and 238-257; these read DSPY…GDRV, DSAL…CSDQ, ESLD…IQKG, TRLL…APDN, KMCN…VVDG, and RGVD…LNDL. Residues 81–107 are a coiled coil; that stretch reads AIVMKQQNRAEEAIEAIKSLRVRCSDQ. A disordered region spans residues 346-376; the sequence is KLKRTRSSSQGMGMLSGIGGDHEGETNTSTR.

Belongs to the MS5 protein family.

It localises to the nucleus. Functionally, probably involved in the regulation of cell division. The chain is Protein POLLENLESS 3-LIKE 2 from Arabidopsis thaliana (Mouse-ear cress).